Reading from the N-terminus, the 914-residue chain is Scaffold attachment factor B1 (914 aa).

A compositionally biased stretch (low complexity) spans 1-24; sequence MAETLSGLGDSGAAGAAALSSASS. Residues 1 to 33 form a disordered region; the sequence is MAETLSGLGDSGAAGAAALSSASSETGTRRLSD. At alanine 2 the chain carries N-acetylalanine. Phosphoserine is present on residues serine 24 and serine 55. The region spanning 31 to 65 is the SAP domain; that stretch reads LSDLRVIDLRAELRKRNVDSSGNKSVLMERLKKAI. The tract at residues 64–117 is disordered; it reads AIEDEGGNPDEIEITSEGNKKTSKRSSKGRKPEEEGVEDNGLEENSGDGQEDVE. The span at 67-77 shows a compositional bias: acidic residues; that stretch reads DEGGNPDEIEI. The residue at position 79 (serine 79) is a Phosphoserine. Residues 98-117 are compositionally biased toward acidic residues; it reads EGVEDNGLEENSGDGQEDVE. Glycyl lysine isopeptide (Lys-Gly) (interchain with G-Cter in SUMO2) cross-links involve residues lysine 172 and lysine 186. Threonine 188 bears the Phosphothreonine mark. Serine 195, serine 197, and serine 209 each carry phosphoserine. A disordered region spans residues 221–407; sequence LGETCKSEPV…EKGRSSCGRN (187 aa). A compositionally biased stretch (basic and acidic residues) spans 225-234; sequence CKSEPVKEES. Lysine 231 participates in a covalent cross-link: Glycyl lysine isopeptide (Lys-Gly) (interchain with G-Cter in SUMO). Polar residues predominate over residues 275 to 286; that stretch reads SESTAHAQSSKA. Positions 293–309 are enriched in basic and acidic residues; it reads VKREPAEQPGDGERTDC. Lysine 294 participates in a covalent cross-link: Glycyl lysine isopeptide (Lys-Gly) (interchain with G-Cter in SUMO). Over residues 319–330 the composition is skewed to low complexity; it reads EQSSAASELAEA. The span at 346-359 shows a compositional bias: basic and acidic residues; that stretch reads EARDSKEDGRKFDF. The segment covering 371-383 has biased composition (polar residues); it reads ESSTSEGADQKMS. Lysine 381 participates in a covalent cross-link: Glycyl lysine isopeptide (Lys-Gly) (interchain with G-Cter in SUMO2). Phosphoserine is present on residues serine 383 and serine 384. Positions 390 to 401 are enriched in basic and acidic residues; sequence DTKRLSKEEKGR. Lysine 392 participates in a covalent cross-link: Glycyl lysine isopeptide (Lys-Gly) (interchain with G-Cter in SUMO2). Residues 406–484 form the RRM domain; sequence RNFWVSGLSS…KMISVEKAKN (79 aa). Position 415 is a phosphoserine (serine 415). 2 stretches are compositionally biased toward basic and acidic residues: residues 477 to 551 and 559 to 570; these read ISVE…ERSR and GTERTVVMDKSK. Disordered regions lie at residues 477 to 636, 670 to 706, and 748 to 914; these read ISVE…QAQW, RERM…QERR, and FDHR…TRRY. Residues lysine 483, lysine 514, lysine 543, and lysine 570 each participate in a glycyl lysine isopeptide (Lys-Gly) (interchain with G-Cter in SUMO2) cross-link. The segment at 528 to 791 is interaction with POLR2A; SFRS1; SFRS9 and SFRS10; sequence GDDGSGEKSK…RHGGPERHGR (264 aa). Lysine 578 is covalently cross-linked (Glycyl lysine isopeptide (Lys-Gly) (interchain with G-Cter in SUMO1); alternate). A Glycyl lysine isopeptide (Lys-Gly) (interchain with G-Cter in SUMO2); alternate cross-link involves residue lysine 578. A phosphoserine mark is found at serine 580, serine 582, serine 601, and serine 604. The segment covering 581–636 has biased composition (basic and acidic residues); that stretch reads GSKERASKSLDRKSASREKRSVVSFDKVKEPRKSRDSESHRVRERSEREQRMQAQW. The Nuclear localization signal signature appears at 599–616; sequence KRSVVSFDKVKEPRKSRD. The tract at residues 599 to 914 is interaction with SAFB2; the sequence is KRSVVSFDKV…PSDARFTRRY (316 aa). Position 607 is an N6-acetyllysine (lysine 607). Residues 748–795 are compositionally biased toward basic and acidic residues; sequence FDHRDRGRYPDHSVDRREGSRSMMGEREGQHYPERHGGPERHGRDSRD. Omega-N-methylarginine is present on arginine 810. 2 stretches are compositionally biased toward basic and acidic residues: residues 816-831 and 840-850; these read PRRD…DDRA and MMDRDHKRWQG. Lysine 846 is covalently cross-linked (Glycyl lysine isopeptide (Lys-Gly) (interchain with G-Cter in SUMO2)). 3 positions are modified to asymmetric dimethylarginine: arginine 867, arginine 873, and arginine 883. The span at 891–900 shows a compositional bias: gly residues; the sequence is GMQGGFGGQS. Positions 904 to 914 are enriched in basic and acidic residues; sequence RPSDARFTRRY.

In terms of assembly, monomer and homodimer. Interacts with KHDRBS3. Interacts with CLK2. Interacts with POLR2A, ASF/SRSF1, SRp30c/SRFS9 and TRA2B/SFRS10. Interacts with SRPK1 and inhibits its activity. Interacts with RBMX. Interacts with FUS. Interacts with ZBED4. Sumoylated by PIAS1 with SUMO1 and SUMO2/3, desumoylated by SENP1. Sumoylation is required for transcriptional repressor activity.

The protein localises to the nucleus. Functionally, binds to scaffold/matrix attachment region (S/MAR) DNA and forms a molecular assembly point to allow the formation of a 'transcriptosomal' complex (consisting of SR proteins and RNA polymerase II) coupling transcription and RNA processing. Functions as an estrogen receptor corepressor and can also bind to the HSP27 promoter and decrease its transcription. Thereby acts as a negative regulator of cell proliferation. When associated with RBMX, binds to and stimulates transcription from the SREBF1 promoter. The protein is Scaffold attachment factor B1 (SAFB) of Pongo abelii (Sumatran orangutan).